A 208-amino-acid chain; its full sequence is MVNSKYSMCSSGWLQKHFKDQYVKAAQRQKLRSRSWFKLDAINRIDALFSTGMTVIDLGSAPGGWALYVKSKIGKTGRIVACDILSMRNISGVNFLKGDCSNPNISKILYKWVGQKQVNVVLSDMAPNTTGISIIDVSRSIHLGNLALNICRNVLMHRGAFLVKVFQGKGLDKYLCDVHSLFNIVRIRKPDASRSHSREVYIVAKERK.

5 residues coordinate S-adenosyl-L-methionine: glycine 63, tryptophan 65, aspartate 83, aspartate 99, and aspartate 124. The active-site Proton acceptor is the lysine 164.

This sequence belongs to the class I-like SAM-binding methyltransferase superfamily. RNA methyltransferase RlmE family.

It is found in the cytoplasm. The catalysed reaction is uridine(2552) in 23S rRNA + S-adenosyl-L-methionine = 2'-O-methyluridine(2552) in 23S rRNA + S-adenosyl-L-homocysteine + H(+). Its function is as follows. Specifically methylates the uridine in position 2552 of 23S rRNA at the 2'-O position of the ribose in the fully assembled 50S ribosomal subunit. This chain is Ribosomal RNA large subunit methyltransferase E, found in Blochmanniella pennsylvanica (strain BPEN).